The sequence spans 3726 residues: MEGCDSPVVSGKDNGCGIPQHRQWTELNSAHLPDKPSSMEQPTGESHGPLDSLRAPFNERLADSSTSAGPPAEPASKEVSCNECSASFSSLQTYMEHHCPGTHPPPALREESASDTSEEGEEESDVENLAGEIVYQPDGSAYIVESLSQLAQSGAACGSSSGSGAVPSLFLNSLPGVGGKQGDPSCAAPVYPQIINTSHIASSFGKWFEGSDPAFPNTSALAGLSPVLHSFRVFDVRHKSNKDYLNSDGSAKSSCVSKDVPNNVDLSKFDGFVLYGKRKPILMCFLCKLSFGYVRSFVTHAVHDHRMTLSEEERKLLSNKNISAIIQGIGKDKEPLVSFLEPKNKNFQHPLVSTGNLIGPGHSFYGKFSGIRMEGEEALPAVAAAGPEQPQAGLLTPSTLLNLGGLTSSVLKTPITSVPLGPLASSPTKSSEGKDSGAAEGDKQESGGHQDCFSEKVEPAEEEEAEEEEEEEEEAEEEEEEEEEEEEEEEEASKGLFPNDLEEELEDSPSEESGPPAGGTTKKDLALSNPSISNSPLMPNVLQTLSRGPASTTSNSASNFVVFDGANRRSRLSFNSEGVRANVAEGRRLDFADESANKDSATAPEPNESTEGDDGGFVPHHQHAGSLCELGVGESPSGSGVECPKCDTVLGSSRSLGGHMTMMHSRNSCKTLKCPKCNWHYKYQQTLEAHMKEKHPEPGGSCVYCKSGQPHPRLARGESYTCGYKPFRCEVCNYSTTTKGNLSIHMQSDKHLNNMQNLQNGGGEQVFSHSAGAAAAAAAAAAAAANIGSSWGAPSPTKPKTKPTWRCEVCDYETNVARNLRIHMTSEKHMHNMMLLQQNMTQIQHNRHLGLGSLPSPAEAELYQYYLAQNMNLPNLKMDSTASDAQFMMSGFQLDPTGPMAAMTPALVGGEIPLDMRLGGGQLVSEELMNLGESFIQTNDPSLKLFQCAVCNKFTTDNLDMLGLHMNVERSLSEDEWKAVMGDSYQCKLCRYNTQLKANFQLHCKTDKHVQKYQLVAHIKEGGKANEWRLKCVAIGNPVHLKCNACDYYTNSLEKLRLHTVNSRHEASLKLYKHLQQHESGVEGESCYYHCVLCNYSTKAKLNLIQHVRSMKHQRSESLRKLQRLQKGLPEEDEDLGQIFTIRRCPSTDPEEPVEDAEGPSEASADPEELAKDQGSGSEEGQSKRAASSSQAEKELTDSPATTKRTSFPGSSETPLSSKRPKASEEIKPEQMYQCPYCKYSNADVNRLRVHAMTQHSVQPLLRCPLCQDMLNNKIHLQLHLTHLHSVAPDCVEKLIMTVTAPEMVMPSSMFLPAAAADRDGNSTLEEVGKQPEASEDPGKNILPPASMEHGGDLKPTSADPSCGREDSGFLCWKKGCNQVFKTSATLQTHFNEVHAKRPQLPVSDRHVYKYRCNQCSLAFKTIEKLQLHSQYHVIRAATMCCLCQRSFRTFQALKKHLETSHLELSEADIQQLYGGLLANGDLLAMGDPTLAEDHTIIVEEDKEEESDLEDKQSPTGSDSGSVQEDSGSEPKRALPFRKGPNFTMEKFLDPSRPYKCTVCKESFTQKNILLVHYNSVSHLHKLKRALQESATGQPEPTSSPDNKPFKCNTCNVAYSQSSTLEIHMRSVLHQTKARAAKLEAASGNSNGTGNSGGVSLSSSTPSPVGSSGANNTFTATNPSSAAMAPSVNALSQVPPESVVMPPLGNPISANIASPSEPKEANRKKLADMIASRQQQQQQQQQQQQQAQTLAQAQAQVQAHLQQELQQQAALIQSQLFNPTLLPHFPMTTETLLQLQQQQHLLFPFYIPSAEFQLNPEVSLPVTSGALTLTGSGPGLLEDLKVQVQIPQQSHQQILQQQQQQSQLSLSQSHSALLQPSQHPEKKNKVVIKEKDKESQREREGPEGAEGNTGPQESLPDASKAKEKKDLAPGGGSEGTMLPPRIASDARGNATKALLENFGFELVIQYNENKQKAQKKNGKAEQGGESLEKLECDSCGKLFSNILILKSHQEHVHQNYFPFKQLERFAKQYREHYDKLYPLRPQTPEPPPPPPPPPPPPLPTAPPQPASAPAIPASAPPITSPTIAPAQPSVPLTQLSMPMELPIFSPLMMQTMPLQTLPAQLPPQLGPVEPLPADLAQLYQHQLNPTLLQQQNKRPRTRITDDQLRVLRQYFDINNSPSEEQIKEMADKSGLPQKVIKHWFRNTLFKERQRNKDSPYNFSNPPITSLEELKIDSRPPSPEPQKQEYWGSKRSSRTRFTDYQLRVLQDFFDANAYPKDDEFEQLSNLLNLPTRVIVVWFQNARQKARKNYENQGEGKDGERRELTNDRYIRTSNLNYQCKKCSLVFQRIFDLIKHQKKLCYKDEDEEGQDDSQNEDSMDAMEILTPTSSSCSTPMPSQAYSTPAPSAAAANTAPSAFLQLTAETDELATFNSKAEASDEKPKQADPPSAQPNQTQEKQGQPKPEMQQQLEQLEQKTNAPQPKLPQPAAPSLPQPPPQAPPPQCPLPQSSPSPSQLSHLPLKPLHTSTPQQLANLPPQLIPYQCDQCKLAFPSFEHWQEHQQLHFLSAQNQFIHPQFLDRSLDMPFMLFDPSNPLLASQLLSGAIPQIPASSATSPSTPTSTMNTLKRKLEEKASASPGENDSGTGGEEPQRDKRLRTTITPEQLEILYQKYLLDSNPTRKMLDHIAHEVGLKKRVVQVWFQNTRARERKGQFRAVGPAQAHRRCPFCRALFKAKTALEAHIRSRHWHEAKRAGYNLTLSAMLLDCDGGLQMKGDIFDGTSFSHLPPSSSDGQGVPLSPVSKTMELSPRTLLSPSSIKVEGIEDFESPSMSSVNLNFDQTKLDNDDCSSVNTAITDTTTGDEGNADNDSATGIATETKSSAPNEGLTKAAMMAMSEYEDRLSSGLVSPAPSFYSKEYDNEGTVDYSETSSLADPCSPSPGASGSAGKSGDGGDRPGQKRFRTQMTNLQLKVLKSCFNDYRTPTMLECEVLGNDIGLPKRVVQVWFQNARAKEKKSKLSMAKHFGINQTSYEGPKTECTLCGIKYSARLSVRDHIFSQQHISKVKDTIGSQLDKEKEYFDPATVRQLMAQQELDRIKKANEVLGLAAQQQGMFDNAPLQALNLPTTYPALQGIPPVLLPGLNRPSLPGFTPANTALTSPKPNLMGLPSTTVPSPGLPTSGLPNKPSSASLSSPTPAQATMAMAPQPPPQPQQPQPPVQQPPPPPAAQQIPAPQLTPQQQRKDKDGEKGKEKEKAHKGKGEPLPVPKKEKGEAPPAGTGTISAPLPAMEYAVDPAQLQALQAALTSDPTALLTSQFLPYFVPGFSPYYAPQIPGALQSGYLQPMYGMEGLFPYSPALSRPLMGLSPGSLLQQYQQYQQSLQEAIQQQQQQQQQQQQQQQQQQRQLQQQQQQQQQKVQQQQQQQQQPKASQTPVPQGAASPDKDPAKESPKPEEQKNVPRELSPLLPKPPEEPEAESKSASADSLCDPFIVPKVQYKLVCRKCQAGFGDEEAARSHLKSLCCFGQSVVNLQEMVLHVPTGSGGGGGGGGGSGGGGGSYHCLACESALCGEEALSQHLESALHKHRTITRAARNAKEHPSLLPHSACFPDPSTASTSQSAAHSNDSPPPPSAAPSSSASPHASRKSWPPVGSRASAAKPPSFPPLSSSSTVTSSSCSTSGVQPSMPTDDYSEESDTDLSQKSDGPASPVEGPKDPSCPKDSGLTSVGTDTFRL.

2 disordered regions span residues 1-79 (MEGC…SKEV) and 95-129 (MEHH…VENL). A C2H2-type 1 zinc finger spans residues 79-103 (VSCNECSASFSSLQTYMEHHCPGTH). The segment covering 116-126 (TSEEGEEESDV) has biased composition (acidic residues). The segment at 282–305 (LMCFLCKLSFGYVRSFVTHAVHDH) adopts a C2H2-type 2 zinc-finger fold. The segment at 417-557 (SVPLGPLASS…GPASTTSNSA (141 aa)) is disordered. Residue Ser-426 is modified to Phosphoserine. Position 428 is a phosphothreonine (Thr-428). Residues 431–459 (SEGKDSGAAEGDKQESGGHQDCFSEKVEP) are compositionally biased toward basic and acidic residues. Acidic residues-rich tracts occupy residues 460–491 (AEEE…EEEE) and 500–510 (DLEEELEDSPS). A compositionally biased stretch (polar residues) spans 528–557 (SNPSISNSPLMPNVLQTLSRGPASTTSNSA). Phosphoserine occurs at positions 535 and 573. The interval 590-621 (DFADESANKDSATAPEPNESTEGDDGGFVPHH) is disordered. 3 C2H2-type zinc fingers span residues 641-664 (VECP…TMMH), 672-695 (LKCP…KEKH), and 727-751 (FRCE…SDKH). The C2H2-type 6; atypical zinc-finger motif lies at 805–829 (WRCEVCDYETNVARNLRIHMTSEKH). The C2H2-type 7; degenerate zinc finger occupies 946–969 (FQCAVCNKFTTDNLDMLGLHMNVE). The C2H2-type 8; atypical zinc finger occupies 985–1009 (YQCKLCRYNTQLKANFQLHCKTDKH). Residues 1041–1065 (LKCNACDYYTNSLEKLRLHTVNSRH) form a C2H2-type 9; atypical zinc finger. A C2H2-type 10; atypical zinc finger spans residues 1089–1113 (YHCVLCNYSTKAKLNLIQHVRSMKH). Residues 1125–1228 (LQKGLPEEDE…KRPKASEEIK (104 aa)) are disordered. Residues 1149-1159 (DPEEPVEDAEG) show a composition bias toward acidic residues. Polar residues-rich tracts occupy residues 1175-1191 (GSGS…SSSQ) and 1199-1217 (SPAT…TPLS). Ser-1207 carries the post-translational modification Phosphoserine. Residues 1233–1256 (YQCPYCKYSNADVNRLRVHAMTQH) form a C2H2-type 11; atypical zinc finger. The segment at 1262–1285 (LRCPLCQDMLNNKIHLQLHLTHLH) adopts a C2H2-type 12 zinc-finger fold. A disordered region spans residues 1320-1361 (DGNSTLEEVGKQPEASEDPGKNILPPASMEHGGDLKPTSADP). 3 consecutive C2H2-type zinc fingers follow at residues 1370–1395 (FLCW…NEVH), 1411–1433 (YRCN…SQYH), and 1439–1462 (TMCC…ETSH). The interval 1500–1539 (EEDKEEESDLEDKQSPTGSDSGSVQEDSGSEPKRALPFRK) is disordered. Residues 1514–1526 (SPTGSDSGSVQED) are compositionally biased toward polar residues. The segment at 1555 to 1579 (YKCTVCKESFTQKNILLVHYNSVSH) adopts a C2H2-type 16 zinc-finger fold. Ser-1600 is subject to Phosphoserine. Residues 1606-1630 (FKCNTCNVAYSQSSTLEIHMRSVLH) form a C2H2-type 17 zinc finger. 3 disordered regions span residues 1639–1678 (LEAA…TATN), 1706–1738 (NPIS…QQQQ), and 1866–1943 (LSQS…PRIA). Over residues 1643-1669 (SGNSNGTGNSGGVSLSSSTPSPVGSSG) the composition is skewed to low complexity. The segment covering 1717-1727 (EPKEANRKKLA) has biased composition (basic and acidic residues). Residues 1866-1878 (LSQSHSALLQPSQ) show a composition bias toward low complexity. The span at 1879-1902 (HPEKKNKVVIKEKDKESQREREGP) shows a compositional bias: basic and acidic residues. The segment at 1990–2013 (LECDSCGKLFSNILILKSHQEHVH) adopts a C2H2-type 18 zinc-finger fold. 2 disordered regions span residues 2037–2089 (YPLR…AQPS) and 2211–2249 (NKDS…WGSK). Positions 2041-2066 (PQTPEPPPPPPPPPPPPLPTAPPQPA) are enriched in pro residues. Positions 2152-2211 (NKRPRTRITDDQLRVLRQYFDINNSPSEEQIKEMADKSGLPQKVIKHWFRNTLFKERQRN) form a DNA-binding region, homeobox 1. Over residues 2214 to 2223 (SPYNFSNPPI) the composition is skewed to polar residues. Positions 2249-2308 (KRSSRTRFTDYQLRVLQDFFDANAYPKDDEFEQLSNLLNLPTRVIVVWFQNARQKARKNY) form a DNA-binding region, homeobox 2. The C2H2-type 19; atypical zinc-finger motif lies at 2335-2358 (YQCKKCSLVFQRIFDLIKHQKKLC). Lys-2356 is covalently cross-linked (Glycyl lysine isopeptide (Lys-Gly) (interchain with G-Cter in SUMO1)). Disordered regions lie at residues 2383–2405 (TPTS…APSA) and 2429–2529 (NSKA…PQQL). Residues 2458–2478 (QPKPEMQQQLEQLEQKTNAPQ) show a composition bias toward low complexity. Residues 2479–2507 (PKLPQPAAPSLPQPPPQAPPPQCPLPQSS) are compositionally biased toward pro residues. Residues 2508 to 2521 (PSPSQLSHLPLKPL) show a composition bias toward low complexity. A C2H2-type 20 zinc finger spans residues 2539–2561 (YQCDQCKLAFPSFEHWQEHQQLH). The short motif at 2624 to 2626 (KRK) is the Nuclear localization signal element. The segment at 2628–2656 (EEKASASPGENDSGTGGEEPQRDKRLRTT) is disordered. Ser-2634 carries the phosphoserine modification. Positions 2650–2709 (DKRLRTTITPEQLEILYQKYLLDSNPTRKMLDHIAHEVGLKKRVVQVWFQNTRARERKGQ) form a DNA-binding region, homeobox 3. The C2H2-type 21 zinc finger occupies 2720 to 2743 (RRCPFCRALFKAKTALEAHIRSRH). The span at 2780 to 2789 (SHLPPSSSDG) shows a compositional bias: polar residues. The disordered stretch occupies residues 2780–2805 (SHLPPSSSDGQGVPLSPVSKTMELSP). 2 positions are modified to phosphoserine: Ser-2795 and Ser-2804. Lys-2815 is covalently cross-linked (Glycyl lysine isopeptide (Lys-Gly) (interchain with G-Cter in SUMO1); alternate). Lys-2815 is covalently cross-linked (Glycyl lysine isopeptide (Lys-Gly) (interchain with G-Cter in SUMO2); alternate). The tract at residues 2850–2877 (AITDTTTGDEGNADNDSATGIATETKSS) is disordered. A phosphoserine mark is found at Ser-2900 and Ser-2904. The tract at residues 2920 to 2955 (VDYSETSSLADPCSPSPGASGSAGKSGDGGDRPGQK) is disordered. Low complexity predominate over residues 2929–2944 (ADPCSPSPGASGSAGK). The segment at residues 2952-3011 (PGQKRFRTQMTNLQLKVLKSCFNDYRTPTMLECEVLGNDIGLPKRVVQVWFQNARAKEKK) is a DNA-binding region (homeobox 4). Residues 3032-3056 (TECTLCGIKYSARLSVRDHIFSQQH) form a C2H2-type 22 zinc finger. Disordered stretches follow at residues 3145-3274 (FTPA…AGTG) and 3415-3476 (QQQQ…SASA). The span at 3147 to 3156 (PANTALTSPK) shows a compositional bias: polar residues. Residues 3181–3199 (PSSASLSSPTPAQATMAMA) show a composition bias toward low complexity. Residues 3200-3221 (PQPPPQPQQPQPPVQQPPPPPA) are compositionally biased toward pro residues. Over residues 3222–3234 (AQQIPAPQLTPQQ) the composition is skewed to low complexity. A compositionally biased stretch (basic and acidic residues) spans 3235 to 3267 (QRKDKDGEKGKEKEKAHKGKGEPLPVPKKEKGE). A Glycyl lysine isopeptide (Lys-Gly) (interchain with G-Cter in SUMO1) cross-link involves residue Lys-3262. Ser-3434 is modified (phosphoserine). Basic and acidic residues predominate over residues 3435–3453 (PDKDPAKESPKPEEQKNVP). The residue at position 3457 (Ser-3457) is a Phosphoserine. Residues 3552–3576 (YHCLACESALCGEEALSQHLESALH) form a C2H2-type 23 zinc finger. Positions 3588 to 3726 (AKEHPSLLPH…TSVGTDTFRL (139 aa)) are disordered. 2 stretches are compositionally biased toward low complexity: residues 3605–3618 (STAS…HSND) and 3645–3677 (SRAS…VQPS). The residue at position 3616 (Ser-3616) is a Phosphoserine. Position 3700 is a phosphoserine (Ser-3700). Polar residues predominate over residues 3715 to 3726 (GLTSVGTDTFRL).

As to quaternary structure, interacts with ALKBH4 and PIAS3. Interacts with FNBP3. Interacts with ESR1, RUNX3, TRIM25, SMAD2 and SMAD3. Phosphorylated at Ser-2634 in both embryonic and adult brain. Phosphorylation at Ser-1600, Ser-2795, Ser-2804, Ser-2900, Ser-3434, Ser-3616 and Ser-3700 is restricted to the embryonic brain. Hyperphosphorylation in embryonic brain protects ZFHX3 from calpain/CAPN1-mediated degradation. In terms of processing, ubiquitinated, leading to its proteasomal degradation. Post-translationally, nuclear localization is essential for its sumoylation. Expressed in suprachiasmatic nucleus (SCN) of the brain (at protein level). Expressed in skeletal muscle. Levels of expression are high in myoblasts but low in differentiated muscle. Expressed in the heart, primarily in the atria.

It is found in the nucleus. The protein localises to the cytoplasm. In terms of biological role, transcriptional regulator which can act as an activator or a repressor. Inhibits the enhancer element of the AFP gene by binding to its AT-rich core sequence. In concert with SMAD-dependent TGF-beta signaling can repress the transcription of AFP via its interaction with SMAD2/3. Regulates the circadian locomotor rhythms via transcriptional activation of neuropeptidergic genes which are essential for intercellular synchrony and rhythm amplitude in the suprachiasmatic nucleus (SCN) of the brain. Regulator of myoblasts differentiation through the binding to the AT-rich sequence of MYF6 promoter and promoter repression. Down-regulates the MUC5AC promoter in gastric cancer. In association with RUNX3, up-regulates CDKN1A promoter activity following TGF-beta stimulation. This Mus musculus (Mouse) protein is Zinc finger homeobox protein 3 (Zfhx3).